Here is a 414-residue protein sequence, read N- to C-terminus: Arrestin domain-containing protein 3 (414 aa).

2 consecutive short sequence motifs (PPxY motif) follow at residues 346 to 349 and 391 to 394; these read PPSY and PPLY. A disordered region spans residues 393–414; that stretch reads LYSEIDPNPDQSSEDRPSCPSR. Positions 405–414 are enriched in basic and acidic residues; sequence SEDRPSCPSR.

Belongs to the arrestin family. As to quaternary structure, interacts (via PPxY motifs) with NEDD4 (via WW domains). Interacts with ADRB2. Interacts with ADRB3. Interacts with HGS (via PPxY motifs). Does not bind TXN (thioredoxin). Interacts with ITCH.

Its subcellular location is the cytoplasm. The protein resides in the cell membrane. It is found in the lysosome. The protein localises to the endosome. It localises to the early endosome. In terms of biological role, adapter protein that plays a role in regulating cell-surface expression of adrenergic receptors and probably also other G protein-coupled receptors. Plays a role in NEDD4-mediated ubiquitination and endocytosis af activated ADRB2 and subsequent ADRB2 degradation. May recruit NEDD4 to ADRB2. Alternatively, may function as adapter protein that does not play a major role in recruiting NEDD4 to ADRB2, but rather plays a role in a targeting ADRB2 to endosomes. The polypeptide is Arrestin domain-containing protein 3 (Arrdc3) (Rattus norvegicus (Rat)).